A 180-amino-acid polypeptide reads, in one-letter code: Large ribosomal subunit protein uL6 (180 aa).

It belongs to the universal ribosomal protein uL6 family. In terms of assembly, part of the 50S ribosomal subunit.

This protein binds to the 23S rRNA, and is important in its secondary structure. It is located near the subunit interface in the base of the L7/L12 stalk, and near the tRNA binding site of the peptidyltransferase center. The polypeptide is Large ribosomal subunit protein uL6 (Mesoplasma florum (strain ATCC 33453 / NBRC 100688 / NCTC 11704 / L1) (Acholeplasma florum)).